Reading from the N-terminus, the 346-residue chain is KH domain-containing, RNA-binding, signal transduction-associated protein 2 (346 aa).

One can recognise a KH domain in the interval 65–131 (LIPVQQYPKF…AKYAHLSNDL (67 aa)). The interval 175–291 (LSYLNGSDDP…SYESYDDNYS (117 aa)) is disordered. Over residues 195–224 (LRLTSTASPRGRGSAAPPAPPGRGAAAPRG) the composition is skewed to low complexity. The segment covering 268–287 (YGYDDGYDGEYDDQSYESYD) has biased composition (acidic residues).

The protein belongs to the KHDRBS family.

It localises to the nucleus. RNA-binding protein that plays a role in the regulation of alternative splicing. This Danio rerio (Zebrafish) protein is KH domain-containing, RNA-binding, signal transduction-associated protein 2 (khdrbs2).